Here is a 488-residue protein sequence, read N- to C-terminus: V-type proton ATPase subunit B 1 (488 aa).

This sequence belongs to the ATPase alpha/beta chains family. In terms of assembly, V-ATPase is a heteromultimeric enzyme composed of a peripheral catalytic V1 complex (main components: subunits A, B, C, D, E, and F) attached to an integral membrane V0 proton pore complex (main component: the proteolipid protein).

Its function is as follows. Non-catalytic subunit of the peripheral V1 complex of vacuolar ATPase. V-ATPase is responsible for acidifying a variety of intracellular compartments in eukaryotic cells. The sequence is that of V-type proton ATPase subunit B 1 from Gossypium hirsutum (Upland cotton).